The following is a 205-amino-acid chain: Guanylate kinase (205 aa).

Residues 18-196 (PKLFIISAPA…AYQVLRSIFI (179 aa)) enclose the Guanylate kinase-like domain. 25 to 32 (APAGAGKT) contributes to the ATP binding site.

The protein belongs to the guanylate kinase family.

It localises to the cytoplasm. It carries out the reaction GMP + ATP = GDP + ADP. Functionally, essential for recycling GMP and indirectly, cGMP. The chain is Guanylate kinase (gmk) from Chlamydia trachomatis serovar D (strain ATCC VR-885 / DSM 19411 / UW-3/Cx).